The chain runs to 213 residues: Uracil phosphoribosyltransferase (213 aa).

Residues Arg-78, Arg-103, and 130 to 138 (DPMLATGGS) contribute to the 5-phospho-alpha-D-ribose 1-diphosphate site. Residues Ile-197 and 202-204 (GDA) contribute to the uracil site. Residue Asp-203 participates in 5-phospho-alpha-D-ribose 1-diphosphate binding.

This sequence belongs to the UPRTase family. The cofactor is Mg(2+).

The catalysed reaction is UMP + diphosphate = 5-phospho-alpha-D-ribose 1-diphosphate + uracil. It functions in the pathway pyrimidine metabolism; UMP biosynthesis via salvage pathway; UMP from uracil: step 1/1. Its activity is regulated as follows. Allosterically activated by GTP. In terms of biological role, catalyzes the conversion of uracil and 5-phospho-alpha-D-ribose 1-diphosphate (PRPP) to UMP and diphosphate. The sequence is that of Uracil phosphoribosyltransferase from Cutibacterium acnes (strain DSM 16379 / KPA171202) (Propionibacterium acnes).